A 459-amino-acid chain; its full sequence is Probable Delta(5) fatty acid desaturase C (459 aa).

Residues 9 to 87 (KKLYSWKEIS…LKQYEIGQVS (79 aa)) form the Cytochrome b5 heme-binding domain. Residues histidine 45 and histidine 68 each contribute to the heme site. The next 2 helical transmembrane spans lie at 121–141 (FAFG…TSYY) and 151–171 (FYLN…FSLH). Positions 174 to 178 (HDACH) match the Histidine box-1 motif. Residues 187–207 (VWKWLGATYDLFIGASFFYWC) traverse the membrane as a helical segment. A Histidine box-2 motif is present at residues 210–215 (HVIGHH). The next 2 membrane-spanning stretches (helical) occupy residues 289-309 (FEII…FIIP) and 315-335 (LVNL…YLSF). The Histidine box-3 motif lies at 394 to 398 (QVVHH).

It belongs to the fatty acid desaturase type 1 family. The cofactor is Fe cation.

The protein localises to the membrane. The polypeptide is Probable Delta(5) fatty acid desaturase C (Dictyostelium discoideum (Social amoeba)).